A 334-amino-acid chain; its full sequence is Glyceraldehyde-3-phosphate dehydrogenase (334 aa).

NAD(+) contacts are provided by residues 12-13 (TI) and glycine 111. A D-glyceraldehyde 3-phosphate-binding site is contributed by 140–142 (SCN). The active-site Nucleophile is the cysteine 141. Arginine 167 provides a ligand contact to NAD(+). 192 to 193 (HG) lines the D-glyceraldehyde 3-phosphate pocket. Glutamine 298 provides a ligand contact to NAD(+).

This sequence belongs to the glyceraldehyde-3-phosphate dehydrogenase family. As to quaternary structure, homotetramer.

It is found in the cytoplasm. It carries out the reaction D-glyceraldehyde 3-phosphate + phosphate + NADP(+) = (2R)-3-phospho-glyceroyl phosphate + NADPH + H(+). It catalyses the reaction D-glyceraldehyde 3-phosphate + phosphate + NAD(+) = (2R)-3-phospho-glyceroyl phosphate + NADH + H(+). Its pathway is carbohydrate degradation; glycolysis; pyruvate from D-glyceraldehyde 3-phosphate: step 1/5. In Thermococcus onnurineus (strain NA1), this protein is Glyceraldehyde-3-phosphate dehydrogenase.